Reading from the N-terminus, the 327-residue chain is Microtubule-associated protein RP/EB family member 2 (327 aa).

The segment at M1–D21 is disordered. The residue at position 2 (P2) is an N-acetylalanine. The residue at position 9 (S9) is a Phosphoserine. Residues T57–D159 form the Calponin-homology (CH) domain. Position 167 is a phosphotyrosine (Y167). 2 disordered regions span residues E171 to L240 and A299 to Y327. Residues Q187 to Y327 are DCTN1-binding. The segment covering S200–S234 has biased composition (low complexity). Residues S219 and S236 each carry the phosphoserine modification. Residues S236–H306 enclose the EB1 C-terminal domain. The interval E259–E302 is APC-binding. Residues S300–H317 are compositionally biased toward basic and acidic residues. Residues E318–Y327 show a composition bias toward low complexity.

It belongs to the MAPRE family. Interacts with DCTN1. Interacts with APC (via C-terminal). Interacts with monomeric and polymerized tubulin. Interacts with SLAIN1. Interacts (via the N-terminal region) with BAG1. Interacts with ASB14. Interacts with HAX1; this interaction is essential for epidermal cell migration. Post-translationally, phosphorylated at Ser-236 by CK2 leading to enhanced cell adhesion. Phosphorylated by CDK1 and AURKB during mitosis reduces the binding affinity of MAPRE2 for microtubules. In terms of processing, ubiquitinated in an ASB14-dependent manner; leading to proteasomal degradation. Expressed in different tumor cell lines. Up-regulated in activated B- and T-lymphocytes.

The protein localises to the cytoplasm. Its subcellular location is the cytoskeleton. Adapter protein that is involved in microtubule polymerization, and spindle function by stabilizing microtubules and anchoring them at centrosomes. Therefore, ensures mitotic progression and genome stability. Acts as a central regulator of microtubule reorganization in apico-basal epithelial differentiation. Plays a role during oocyte meiosis by regulating microtubule dynamics. Participates in neurite growth by interacting with plexin B3/PLXNB3 and microtubule reorganization during apico-basal epithelial differentiation. Also plays an essential role for cell migration and focal adhesion dynamics. Mechanistically, recruits HAX1 to microtubules in order to regulate focal adhesion dynamics. The chain is Microtubule-associated protein RP/EB family member 2 (MAPRE2) from Homo sapiens (Human).